A 213-amino-acid polypeptide reads, in one-letter code: Oxidase ustYa (213 aa).

Residues 1 to 26 (MAERSSNGYKEVPVRQSEESTIAEEE) form a disordered region. The chain crosses the membrane as a helical span at residues 48–68 (AVWFLIALLLLSNIGLLGGLI). Asparagine 98 carries N-linked (GlcNAc...) asparagine glycosylation. 2 consecutive short sequence motifs (HXXHC) follow at residues 123–127 (HQLHC) and 150–154 (HLMHC).

It belongs to the ustYa family.

The protein resides in the membrane. It participates in mycotoxin biosynthesis. In terms of biological role, oxidase; part of the gene cluster that mediates the biosynthesis of the secondary metabolite ustiloxin B, an antimitotic tetrapeptide. First, ustA is processed by the subtilisin-like endoprotease Kex2 that is outside the ustiloxin B gene cluster, at the C-terminal side of Arg-Lys, after transfer to Golgi apparatus through the endoplasmic reticulum (ER). Cleavage by KEX2 generates 16 peptides YAIG-I to YAIG-XVI. To process the precursor peptide further, at least two peptidases are necessary to cleave the N-terminal and C-terminal sides of the Tyr-Ala-Ile-Gly core peptide which serves as backbone for the synthesis of ustiloxin B, through cyclization and modification of the tyrosine with a non-protein coding amino acid, norvaline. One of the two peptidases must be the serine peptidase ustP; and the other pepdidase is probably ustH. Macrocyclization of the core peptide derived from ustA requires the tyrosinase ustQ, as well as the homologous oxidases ustYa and ustYb, and leads to the production of the first cyclization product N-desmethylustiloxin F. For the formation of N-desmethylustiloxin F, three oxidation steps are required, hydroxylation at the benzylic position, hydroxylation at either the aromatic ring of Tyr or beta-position of Ile, and oxidative cyclization. UstQ may catalyze the oxidation of a phenol moiety, whereas the ustYa and ustYb are most likely responsible for the remaining two-step oxidations. N-desmethylustiloxin F is then methylated by ustM to yield ustiloxin F which in turn substrate of the cytochrome P450 monooxygenase ustC which catalyzes the formation of S-deoxyustiloxin H. The flavoprotein monooxygenases ustF1 and ustF2 then participate in the modification of the side chain of S-deoxyustiloxin H, leading to the synthesis of an oxime intermediate, via ustiloxin H. Finally, carboxylative dehydration performed by the cysteine desulfurase-like protein ustD yields ustiloxin B. This Aspergillus flavus (strain ATCC 200026 / FGSC A1120 / IAM 13836 / NRRL 3357 / JCM 12722 / SRRC 167) protein is Oxidase ustYa.